A 390-amino-acid chain; its full sequence is MKSFLVDQDGYYGEFGGAYVPEILHKCVEELQNTYLDVIESEDFKKEFDQLLRDYVGRPSPLYPARRLSEKYGCKMYLKREDLNHTGAHKINNTIGQILLARRMGKKRIIAETGAGQHGVATATVCALMNMECIVYMGKTDVERQHINVEKMKMLGATVVPVTSGNMTLKDATNEAIRDWCCHPSDTYYIIGSTVGPHPYPDMVARLQSVISEEIKKQLQEKEGRDYPDYLIACVGGGSNAAGTIYHYIDDERVRIVLAEAGGKGIETGMTAATIQLGKMGIIHGARTFVIQNEDGQIEEPYSISAGLDYPGIGPMHANLADKKRAMVLAVNDDEAIRAAYELTRLEGIIPALESAHALGALEKITFKPEDVVVLTVSGRGDKDIETYLG.

K90 carries the post-translational modification N6-(pyridoxal phosphate)lysine.

This sequence belongs to the TrpB family. In terms of assembly, tetramer of two alpha and two beta chains. Pyridoxal 5'-phosphate is required as a cofactor.

It carries out the reaction (1S,2R)-1-C-(indol-3-yl)glycerol 3-phosphate + L-serine = D-glyceraldehyde 3-phosphate + L-tryptophan + H2O. The protein operates within amino-acid biosynthesis; L-tryptophan biosynthesis; L-tryptophan from chorismate: step 5/5. In terms of biological role, the beta subunit is responsible for the synthesis of L-tryptophan from indole and L-serine. The polypeptide is Tryptophan synthase beta chain (Bacteroides fragilis (strain ATCC 25285 / DSM 2151 / CCUG 4856 / JCM 11019 / LMG 10263 / NCTC 9343 / Onslow / VPI 2553 / EN-2)).